A 370-amino-acid polypeptide reads, in one-letter code: Alpha-ketoglutarate-dependent xanthine dioxygenase xanA (370 aa).

Histidine 107 lines the substrate pocket. Fe cation is bound by residues histidine 149 and aspartate 151. Positions 195 and 325 each coordinate 2-oxoglutarate. Histidine 340 provides a ligand contact to Fe cation. Arginine 352 contacts 2-oxoglutarate.

Belongs to the TfdA dioxygenase family. The cofactor is Fe(2+). In terms of processing, glycosylated. Is subject to both N- and O-linked glycosylation. Phosphorylated.

It localises to the cytoplasm. The protein localises to the cytosol. It catalyses the reaction xanthine + 2-oxoglutarate + O2 = urate + succinate + CO2. With respect to regulation, cu(2+) and Zn(2+) completely inhibit the xanthine dioxygenase activity, whereas Co(2+), Mn(2+), and Ni(2+) partially inhibit the activity. The inactive metal ions are presumed to compete for the Fe(2+)-binding site. N-oxalylglycine (NOG), a known inhibitor of several Fe(2+)/alpha-ketoglutarate-dependent dioxygenase family members, competes with alpha-ketoglutarate and provides a Ki of 0.12 uM for inhibition. 6,8-dihydroxypurine acts as a slow-binding competitive inhibitor. The thiol-specific inhibitors 5,5'-dithiobis(2-nitrobenzoic acid) (DTNB) and iodoacetamide, inhibit also the catalytic activity. In terms of biological role, alpha-ketoglutarate-dependent xanthine dioxygenase is a non-heme mononuclear Fe(2+) enzyme that decarboxylates alpha-ketoglutarate to succinate and CO(2) while hydroxylating xanthine to generate uric acid. Allows xanthine utilization as a nitrogen source. Whereas xanA is highly specific for xanthine, alpha-ketoadipic acid can replace alpha-ketoglutarate as a cosubstrate. Exhibits ferroxidase activity in the absence of substrates. The protein is Alpha-ketoglutarate-dependent xanthine dioxygenase xanA of Emericella nidulans (Aspergillus nidulans).